The following is a 64-amino-acid chain: Large ribosomal subunit protein bL35 (64 aa).

It belongs to the bacterial ribosomal protein bL35 family.

This Clavibacter michiganensis subsp. michiganensis (strain NCPPB 382) protein is Large ribosomal subunit protein bL35.